A 692-amino-acid chain; its full sequence is Potassium-transporting ATPase ATP-binding subunit (692 aa).

A run of 4 helical transmembrane segments spans residues 35-55 (VMFIVFLGALFTTWIFFKDLY), 64-84 (LQISLWLWFTVLFANFAEAIA), 213-233 (IALTMLLSGLSFIFLIAVMSL), and 254-274 (ILISLLVCLIPTTIAGLLSAI). Residue D307 is the 4-aspartylphosphate intermediate of the active site. ATP contacts are provided by residues D344, E348, 377-384 (FSASTKMS), and K400. D523 and D527 together coordinate Mg(2+). Helical transmembrane passes span 592–612 (YFAILPALFGSFYAVSEVGPL), 626–646 (AVLSAVIFNALVIPALIPLAL), and 672–692 (MVIPFLGIKCIDLMLGFLGII).

It belongs to the cation transport ATPase (P-type) (TC 3.A.3) family. Type IA subfamily. As to quaternary structure, the system is composed of three essential subunits: KdpA, KdpB and KdpC.

Its subcellular location is the cell inner membrane. The enzyme catalyses K(+)(out) + ATP + H2O = K(+)(in) + ADP + phosphate + H(+). Part of the high-affinity ATP-driven potassium transport (or Kdp) system, which catalyzes the hydrolysis of ATP coupled with the electrogenic transport of potassium into the cytoplasm. This subunit is responsible for energy coupling to the transport system and for the release of the potassium ions to the cytoplasm. This Leptospira interrogans serogroup Icterohaemorrhagiae serovar Lai (strain 56601) protein is Potassium-transporting ATPase ATP-binding subunit.